Reading from the N-terminus, the 125-residue chain is Large ribosomal subunit protein bL12 (125 aa).

The protein belongs to the bacterial ribosomal protein bL12 family. Homodimer. Part of the ribosomal stalk of the 50S ribosomal subunit. Forms a multimeric L10(L12)X complex, where L10 forms an elongated spine to which 2 to 4 L12 dimers bind in a sequential fashion. Binds GTP-bound translation factors.

In terms of biological role, forms part of the ribosomal stalk which helps the ribosome interact with GTP-bound translation factors. Is thus essential for accurate translation. In Cereibacter sphaeroides (Rhodobacter sphaeroides), this protein is Large ribosomal subunit protein bL12.